Consider the following 434-residue polypeptide: Methylenetetrahydrofolate--tRNA-(uracil-5-)-methyltransferase TrmFO (434 aa).

10–15 (GAGLAG) serves as a coordination point for FAD.

The protein belongs to the MnmG family. TrmFO subfamily. Requires FAD as cofactor.

The protein localises to the cytoplasm. It catalyses the reaction uridine(54) in tRNA + (6R)-5,10-methylene-5,6,7,8-tetrahydrofolate + NADH + H(+) = 5-methyluridine(54) in tRNA + (6S)-5,6,7,8-tetrahydrofolate + NAD(+). The enzyme catalyses uridine(54) in tRNA + (6R)-5,10-methylene-5,6,7,8-tetrahydrofolate + NADPH + H(+) = 5-methyluridine(54) in tRNA + (6S)-5,6,7,8-tetrahydrofolate + NADP(+). Catalyzes the folate-dependent formation of 5-methyl-uridine at position 54 (M-5-U54) in all tRNAs. The sequence is that of Methylenetetrahydrofolate--tRNA-(uracil-5-)-methyltransferase TrmFO from Bacillus anthracis (strain A0248).